The primary structure comprises 135 residues: 6,7-dimethyl-8-ribityllumazine synthase (135 aa).

Residues Phe12, 44–46, and 68–70 each bind 5-amino-6-(D-ribitylamino)uracil; these read AYD and CVI. 73-74 contacts (2S)-2-hydroxy-3-oxobutyl phosphate; sequence AT. The active-site Proton donor is His76. Residue Leu101 coordinates 5-amino-6-(D-ribitylamino)uracil. Arg116 contacts (2S)-2-hydroxy-3-oxobutyl phosphate.

Belongs to the DMRL synthase family.

It catalyses the reaction (2S)-2-hydroxy-3-oxobutyl phosphate + 5-amino-6-(D-ribitylamino)uracil = 6,7-dimethyl-8-(1-D-ribityl)lumazine + phosphate + 2 H2O + H(+). It participates in cofactor biosynthesis; riboflavin biosynthesis; riboflavin from 2-hydroxy-3-oxobutyl phosphate and 5-amino-6-(D-ribitylamino)uracil: step 1/2. In terms of biological role, catalyzes the formation of 6,7-dimethyl-8-ribityllumazine by condensation of 5-amino-6-(D-ribitylamino)uracil with 3,4-dihydroxy-2-butanone 4-phosphate. This is the penultimate step in the biosynthesis of riboflavin. The polypeptide is 6,7-dimethyl-8-ribityllumazine synthase (Methanoculleus marisnigri (strain ATCC 35101 / DSM 1498 / JR1)).